A 160-amino-acid chain; its full sequence is Putative 4-hydroxy-4-methyl-2-oxoglutarate aldolase (160 aa).

Substrate-binding positions include 78-81 (GDVI) and R100. D101 contacts a divalent metal cation.

This sequence belongs to the class II aldolase/RraA-like family. Homotrimer. A divalent metal cation serves as cofactor.

The catalysed reaction is 4-hydroxy-4-methyl-2-oxoglutarate = 2 pyruvate. The enzyme catalyses oxaloacetate + H(+) = pyruvate + CO2. Functionally, catalyzes the aldol cleavage of 4-hydroxy-4-methyl-2-oxoglutarate (HMG) into 2 molecules of pyruvate. Also contains a secondary oxaloacetate (OAA) decarboxylase activity due to the common pyruvate enolate transition state formed following C-C bond cleavage in the retro-aldol and decarboxylation reactions. The protein is Putative 4-hydroxy-4-methyl-2-oxoglutarate aldolase of Mycolicibacterium paratuberculosis (strain ATCC BAA-968 / K-10) (Mycobacterium paratuberculosis).